The following is a 326-amino-acid chain: Putative GTPase CC_2483 (326 aa).

GTP-binding positions include 61–69 (GVPGAGKST), Asp-203, and 238–240 (SGL).

It belongs to the SIMIBI class G3E GTPase family. ArgK/MeaB subfamily.

Its function is as follows. May have GTPase activity. May also bind and hydrolyze ATP. May function as chaperone. In Caulobacter vibrioides (strain ATCC 19089 / CIP 103742 / CB 15) (Caulobacter crescentus), this protein is Putative GTPase CC_2483.